Reading from the N-terminus, the 735-residue chain is 1,4-alpha-glucan branching enzyme GlgB 1 (735 aa).

Aspartate 418 (nucleophile) is an active-site residue. Glutamate 471 (proton donor) is an active-site residue.

Belongs to the glycosyl hydrolase 13 family. GlgB subfamily. In terms of assembly, monomer.

It carries out the reaction Transfers a segment of a (1-&gt;4)-alpha-D-glucan chain to a primary hydroxy group in a similar glucan chain.. It participates in glycan biosynthesis; glycogen biosynthesis. Catalyzes the formation of the alpha-1,6-glucosidic linkages in glycogen by scission of a 1,4-alpha-linked oligosaccharide from growing alpha-1,4-glucan chains and the subsequent attachment of the oligosaccharide to the alpha-1,6 position. In Rhizobium johnstonii (strain DSM 114642 / LMG 32736 / 3841) (Rhizobium leguminosarum bv. viciae), this protein is 1,4-alpha-glucan branching enzyme GlgB 1.